Here is a 251-residue protein sequence, read N- to C-terminus: Triosephosphate isomerase (251 aa).

Substrate is bound by residues asparagine 10 and lysine 12. Catalysis depends on histidine 95, which acts as the Electrophile. Glutamate 167 acts as the Proton acceptor in catalysis.

The protein belongs to the triosephosphate isomerase family. As to quaternary structure, homodimer.

The enzyme catalyses D-glyceraldehyde 3-phosphate = dihydroxyacetone phosphate. The protein operates within carbohydrate biosynthesis; gluconeogenesis. Its pathway is carbohydrate degradation; glycolysis; D-glyceraldehyde 3-phosphate from glycerone phosphate: step 1/1. The chain is Triosephosphate isomerase (TPI) from Coprinopsis cinerea (strain Okayama-7 / 130 / ATCC MYA-4618 / FGSC 9003) (Inky cap fungus).